The chain runs to 230 residues: Protein GrpE (230 aa).

Disordered stretches follow at residues 1 to 28 (MADEKNKPENPDLDQRDINNPRDREALK) and 209 to 230 (GVSKGGPKVSAENGASTSEDNA). Positions 221–230 (NGASTSEDNA) are enriched in polar residues.

Belongs to the GrpE family. In terms of assembly, homodimer.

It localises to the cytoplasm. Participates actively in the response to hyperosmotic and heat shock by preventing the aggregation of stress-denatured proteins, in association with DnaK and GrpE. It is the nucleotide exchange factor for DnaK and may function as a thermosensor. Unfolded proteins bind initially to DnaJ; upon interaction with the DnaJ-bound protein, DnaK hydrolyzes its bound ATP, resulting in the formation of a stable complex. GrpE releases ADP from DnaK; ATP binding to DnaK triggers the release of the substrate protein, thus completing the reaction cycle. Several rounds of ATP-dependent interactions between DnaJ, DnaK and GrpE are required for fully efficient folding. This chain is Protein GrpE, found in Brucella ovis (strain ATCC 25840 / 63/290 / NCTC 10512).